The primary structure comprises 336 residues: Dihydroorotate dehydrogenase (quinone) (336 aa).

FMN contacts are provided by residues 62 to 66 (AGLDK) and T86. K66 is a substrate binding site. Substrate is bound at residue 111-115 (NRMGF). FMN is bound by residues N139 and N172. Residue N172 coordinates substrate. S175 serves as the catalytic Nucleophile. N177 is a substrate binding site. FMN is bound by residues K217 and T245. 246 to 247 (NT) is a binding site for substrate. FMN is bound by residues G268, G297, and 318–319 (YS).

It belongs to the dihydroorotate dehydrogenase family. Type 2 subfamily. Monomer. Requires FMN as cofactor.

The protein localises to the cell membrane. The catalysed reaction is (S)-dihydroorotate + a quinone = orotate + a quinol. It functions in the pathway pyrimidine metabolism; UMP biosynthesis via de novo pathway; orotate from (S)-dihydroorotate (quinone route): step 1/1. Functionally, catalyzes the conversion of dihydroorotate to orotate with quinone as electron acceptor. The chain is Dihydroorotate dehydrogenase (quinone) from Baumannia cicadellinicola subsp. Homalodisca coagulata.